We begin with the raw amino-acid sequence, 172 residues long: 3-phenylpropionate/cinnamic acid dioxygenase subunit beta (172 aa).

This sequence belongs to the bacterial ring-hydroxylating dioxygenase beta subunit family. In terms of assembly, this dioxygenase system consists of four proteins: the two subunits of the hydroxylase component (HcaE and HcaF), a ferredoxin (HcaC) and a ferredoxin reductase (HcaD).

It carries out the reaction 3-phenylpropanoate + NADH + O2 + H(+) = 3-(cis-5,6-dihydroxycyclohexa-1,3-dien-1-yl)propanoate + NAD(+). The enzyme catalyses (E)-cinnamate + NADH + O2 + H(+) = (2E)-3-(cis-5,6-dihydroxycyclohexa-1,3-dien-1-yl)prop-2-enoate + NAD(+). It functions in the pathway aromatic compound metabolism; 3-phenylpropanoate degradation. Part of the multicomponent 3-phenylpropionate dioxygenase. Converts 3-phenylpropionic acid (PP) and cinnamic acid (CI) into 3-phenylpropionate-dihydrodiol (PP-dihydrodiol) and cinnamic acid-dihydrodiol (CI-dihydrodiol), respectively. The protein is 3-phenylpropionate/cinnamic acid dioxygenase subunit beta of Shigella boydii serotype 4 (strain Sb227).